A 330-amino-acid polypeptide reads, in one-letter code: Ketol-acid reductoisomerase (NADP(+)) (330 aa).

One can recognise a KARI N-terminal Rossmann domain in the interval 2–182 (VETFYEKDAD…GCTRAGVIKT (181 aa)). Residues 25 to 28 (YGSQ), Lys-48, Ser-51, Ser-53, and 83 to 86 (DEVQ) contribute to the NADP(+) site. The active site involves His-108. Gly-134 lines the NADP(+) pocket. In terms of domain architecture, KARI C-terminal knotted spans 183–328 (TFKEETETDL…EKLRAMMPWI (146 aa)). Mg(2+) is bound by residues Asp-191, Glu-195, Glu-227, and Glu-231. A substrate-binding site is contributed by Ser-252.

This sequence belongs to the ketol-acid reductoisomerase family. Mg(2+) serves as cofactor.

It carries out the reaction (2R)-2,3-dihydroxy-3-methylbutanoate + NADP(+) = (2S)-2-acetolactate + NADPH + H(+). The enzyme catalyses (2R,3R)-2,3-dihydroxy-3-methylpentanoate + NADP(+) = (S)-2-ethyl-2-hydroxy-3-oxobutanoate + NADPH + H(+). It participates in amino-acid biosynthesis; L-isoleucine biosynthesis; L-isoleucine from 2-oxobutanoate: step 2/4. It functions in the pathway amino-acid biosynthesis; L-valine biosynthesis; L-valine from pyruvate: step 2/4. Functionally, involved in the biosynthesis of branched-chain amino acids (BCAA). Catalyzes an alkyl-migration followed by a ketol-acid reduction of (S)-2-acetolactate (S2AL) to yield (R)-2,3-dihydroxy-isovalerate. In the isomerase reaction, S2AL is rearranged via a Mg-dependent methyl migration to produce 3-hydroxy-3-methyl-2-ketobutyrate (HMKB). In the reductase reaction, this 2-ketoacid undergoes a metal-dependent reduction by NADPH to yield (R)-2,3-dihydroxy-isovalerate. The polypeptide is Ketol-acid reductoisomerase (NADP(+)) (Petrotoga mobilis (strain DSM 10674 / SJ95)).